The chain runs to 42 residues: Potassium channel toxin gamma-KTx 1.2 (42 aa).

Cystine bridges form between Cys5/Cys23, Cys11/Cys34, Cys20/Cys39, and Cys24/Cys41.

It belongs to the ergtoxin family. Gamma-KTx 1 subfamily. As to expression, expressed by the venom gland.

Its subcellular location is the secreted. Functionally, blocks Kv11/ERG potassium channels. The sequence is that of Potassium channel toxin gamma-KTx 1.2 from Centruroides elegans (Bark scorpion).